Here is a 516-residue protein sequence, read N- to C-terminus: Adenosine deaminase (516 aa).

The N-terminal stretch at 1 to 20 is a signal peptide; that stretch reads MFPRLIVWLLAASAVHAVLD.

Belongs to the metallo-dependent hydrolases superfamily. Adenosine and AMP deaminases family. ADGF subfamily. It depends on Zn(2+) as a cofactor. In terms of tissue distribution, salivary gland (at protein level).

The protein resides in the secreted. It catalyses the reaction adenosine + H2O + H(+) = inosine + NH4(+). In terms of biological role, catalyzes the deamination of adenosine to inosine. This is Adenosine deaminase from Phlebotomus duboscqi (Sandfly).